The sequence spans 736 residues: Capsid protein (736 aa).

Residues 633 to 692 (ESDALTLSPVHRPKRPKRDTQVKEKTPEKDSDSAVQLRRLQPWIHSSQETKDEEEEIPEG) form a disordered region. Basic and acidic residues predominate over residues 650–664 (RDTQVKEKTPEKDSD).

This sequence belongs to the anelloviridae capsid protein family.

The protein localises to the virion. Functionally, self assemble to form an icosahedral capsid. The chain is Capsid protein from Torque teno virus (isolate Human/Finland/Hel32/2002) (TTV).